The following is a 419-amino-acid chain: G protein-activated inward rectifier potassium channel 4 (419 aa).

Residues Met-1–Trp-86 lie on the Cytoplasmic side of the membrane. Phosphoserine is present on Ser-5. The chain crosses the membrane as a helical span at residues Arg-87–Ile-111. Topologically, residues Ala-112–Gly-135 are extracellular. The segment at residues Phe-136–Glu-147 is an intramembrane region (helical; Pore-forming). Residues Thr-148–Phe-154 constitute an intramembrane region (pore-forming). The short motif at Thr-149–Phe-154 is the Selectivity filter element. Over Arg-155–Glu-163 the chain is Extracellular. The chain crosses the membrane as a helical span at residues Gly-164–Cys-185. Over Met-186 to Val-419 the chain is Cytoplasmic. Residues Ala-390–Val-419 form a disordered region. The span at Leu-394–Glu-405 shows a compositional bias: acidic residues.

This sequence belongs to the inward rectifier-type potassium channel (TC 1.A.2.1) family. KCNJ5 subfamily. Associates with KCNJ3/GIRK1 to form a G-protein-activated heteromultimer pore-forming unit. The resulting inward current is much larger. Associates with KCNJ6/GIRK2 to form a G-protein-activated heteromultimer pore-forming unit. As to expression, islets, exocrine pancreas and heart. Expressed in the adrenal cortex, particularly the zona glomerulosa.

Its subcellular location is the membrane. It carries out the reaction K(+)(in) = K(+)(out). With respect to regulation, heteromultimer composed of KCNJ3/GIRK1 and KCNJ5/GIRK4 is activated by phosphatidylinositol 4,5 biphosphate (PtdIns(4,5)P2). Functionally, inward rectifier potassium channels are characterized by a greater tendency to allow potassium to flow into the cell rather than out of it. Their voltage dependence is regulated by the concentration of extracellular potassium; as external potassium is raised, the voltage range of the channel opening shifts to more positive voltages. The inward rectification is mainly due to the blockage of outward current by internal magnesium. Can be blocked by external barium. This potassium channel is controlled by G proteins. The sequence is that of G protein-activated inward rectifier potassium channel 4 (KCNJ5) from Homo sapiens (Human).